Here is a 414-residue protein sequence, read N- to C-terminus: 2,3-bisphosphoglycerate-independent phosphoglycerate mutase (414 aa).

The protein belongs to the BPG-independent phosphoglycerate mutase family. A-PGAM subfamily.

The enzyme catalyses (2R)-2-phosphoglycerate = (2R)-3-phosphoglycerate. It functions in the pathway carbohydrate degradation; glycolysis; pyruvate from D-glyceraldehyde 3-phosphate: step 3/5. Functionally, catalyzes the interconversion of 2-phosphoglycerate and 3-phosphoglycerate. This chain is 2,3-bisphosphoglycerate-independent phosphoglycerate mutase, found in Saccharolobus solfataricus (strain ATCC 35092 / DSM 1617 / JCM 11322 / P2) (Sulfolobus solfataricus).